The chain runs to 265 residues: uncharacterized protein (265 aa).

The chain crosses the membrane as a helical span at residues 1–21 (MAFNNSTIIIIIVIAFAFFLI). Asn74 and Asn142 each carry an N-linked (GlcNAc...) asparagine; by host glycan.

It is found in the host membrane. The protein resides in the virion. This is an uncharacterized protein from Acanthamoeba polyphaga mimivirus (APMV).